The chain runs to 189 residues: Leucine repeat adapter protein 25 (189 aa).

At Ser28 the chain carries Phosphoserine. The disordered stretch occupies residues 54–83 (ELSRAARAPDGPRHAAGAANAGPAAGPRRP). Low complexity predominate over residues 67–83 (HAAGAANAGPAAGPRRP). The stretch at 86–114 (LDSALAALRKEMVGLRQLDMSLLCQLWGL) is one LRR repeat. A disordered region spans residues 141–175 (DSSYPPDAGLSDDEEPPDASLPPDPPPLTVPQTHN). Residues 159-169 (ASLPPDPPPLT) show a composition bias toward pro residues. Ser188 is subject to Phosphoserine.

The protein belongs to the FAM89 family. As to quaternary structure, interacts with SKI. Interacts (via LRR repeat) with CDC42BPA (via AGC-kinase C-terminal domain), CDC42BPB (via AGC-kinase C-terminal domain) and LIMK1 (via LIM zinc-binding domains). Forms a tripartite complex with CDC42BPA, CDC42BPB and LIMK1.

It is found in the cytoplasm. Its subcellular location is the cell projection. The protein resides in the lamellipodium. In terms of biological role, negatively regulates TGF-beta-induced signaling; in cooperation with SKI prevents the translocation of SMAD2 from the nucleus to the cytoplasm in response to TGF-beta. Acts as an adapter that mediates the specific recognition of LIMK1 by CDC42BPA and CDC42BPB in the lamellipodia. LRAP25-mediated CDC42BPA/CDC42BPB targeting to LIMK1 and the lamellipodium results in LIMK1 activation and the subsequent phosphorylation of CFL1 which is important for lamellipodial F-actin regulation. This Homo sapiens (Human) protein is Leucine repeat adapter protein 25 (FAM89B).